The primary structure comprises 405 residues: Glucose-1-phosphate adenylyltransferase 1 (405 aa).

Alpha-D-glucose 1-phosphate-binding positions include Tyr96, Gly161, 176 to 177, and Ser194; that span reads EK.

Belongs to the bacterial/plant glucose-1-phosphate adenylyltransferase family. As to quaternary structure, homotetramer.

The catalysed reaction is alpha-D-glucose 1-phosphate + ATP + H(+) = ADP-alpha-D-glucose + diphosphate. It functions in the pathway glycan biosynthesis; glycogen biosynthesis. Functionally, involved in the biosynthesis of ADP-glucose, a building block required for the elongation reactions to produce glycogen. Catalyzes the reaction between ATP and alpha-D-glucose 1-phosphate (G1P) to produce pyrophosphate and ADP-Glc. This is Glucose-1-phosphate adenylyltransferase 1 from Vibrio cholerae serotype O1 (strain ATCC 39315 / El Tor Inaba N16961).